Reading from the N-terminus, the 470-residue chain is MIESNHVVLWNRCLEVIKDNVPETTYNTWFAPIVPLKYEDKTLIVQIPSQFFYEILEEKFVDLLRKTLYKAIGEGTKLMYNVMVDKTSIPNQTVNLEASNRSTAVTPKSIVGGNKAPSFLKAPAVQDLDPHLNPNYNFENFIEGYSNKLSRSVAEAVAQNPAGTAFNPLFLYGASGVGKTHLANAIGTKIKELYADKRVLYVSAHLFQVQYTDSVRNNTTNDFINFYQTIDVLIIDDIQEFAGVTKTQNTFFHIFNHLHQNGKQLILTSDRAPVLLQGMEERLLTRFKWGMVAELEKPTVELRKNILRNKIHRDGLQFPPEVIDYIAENVNESVRDLEGIVIAIMARSTIFNKEIDLDLAQHIVHGVVHNETKAVTIDDILKVVCKHFDLEASAIHTKSRKREVVQARQIAMYLAKNYTDFSTSKIGKFIGNKDHATVLHACKTVKGQLEVDKSFQAEVQEIESLLKKKA.

The tract at residues 1–89 is domain I, interacts with DnaA modulators; the sequence is MIESNHVVLW…YNVMVDKTSI (89 aa). The domain II stretch occupies residues 89 to 130; that stretch reads IPNQTVNLEASNRSTAVTPKSIVGGNKAPSFLKAPAVQDLDP. The segment at 131 to 348 is domain III, AAA+ region; the sequence is HLNPNYNFEN…GIVIAIMARS (218 aa). Residues Gly176, Gly178, Lys179, and Thr180 each coordinate ATP. The interval 349-470 is domain IV, binds dsDNA; sequence TIFNKEIDLD…EIESLLKKKA (122 aa).

The protein belongs to the DnaA family. Oligomerizes as a right-handed, spiral filament on DNA at oriC.

It localises to the cytoplasm. In terms of biological role, plays an essential role in the initiation and regulation of chromosomal replication. ATP-DnaA binds to the origin of replication (oriC) to initiate formation of the DNA replication initiation complex once per cell cycle. Binds the DnaA box (a 9 base pair repeat at the origin) and separates the double-stranded (ds)DNA. Forms a right-handed helical filament on oriC DNA; dsDNA binds to the exterior of the filament while single-stranded (ss)DNA is stabiized in the filament's interior. The ATP-DnaA-oriC complex binds and stabilizes one strand of the AT-rich DNA unwinding element (DUE), permitting loading of DNA polymerase. After initiation quickly degrades to an ADP-DnaA complex that is not apt for DNA replication. Binds acidic phospholipids. The sequence is that of Chromosomal replication initiator protein DnaA from Bacteroides thetaiotaomicron (strain ATCC 29148 / DSM 2079 / JCM 5827 / CCUG 10774 / NCTC 10582 / VPI-5482 / E50).